We begin with the raw amino-acid sequence, 171 residues long: uncharacterized protein (171 aa).

Transmembrane regions (helical) follow at residues 13–35 (VGAS…IATA) and 50–72 (ATVL…AYVV).

The protein resides in the cell membrane. This is an uncharacterized protein from Treponema pallidum (strain Nichols).